The sequence spans 967 residues: Probable serine/threonine-protein kinase DDB_G0290621 (967 aa).

3 disordered regions span residues 65–122 (EDSD…KEKE), 215–251 (SSLSSSINNSSNNNSNISSSPLSSSPLTLSSSSSSSS), and 287–326 (QQQLPPPPPSQQQQQQQQQQQQQNNSMLQQSNNNNISPRT). Residues 66 to 94 (DSDEDDDDEEDEEDEEDSDEEEDDDVVED) are compositionally biased toward acidic residues. The span at 95–122 (DNTKDIGKSRDSDKSIKGKEKGKEKEKE) shows a compositional bias: basic and acidic residues. Over residues 297-326 (QQQQQQQQQQQQQNNSMLQQSNNNNISPRT) the composition is skewed to low complexity. The region spanning 345-610 (FNDSNKIGEG…EIRSRLSEII (266 aa)) is the Protein kinase domain. Residues 351–359 (IGEGGQCSI) and lysine 368 contribute to the ATP site. The active-site Proton acceptor is the aspartate 467. Disordered stretches follow at residues 634-667 (DDSLINNNNNNNQNNNNQNNNNNNNNNNNNNNNN), 700-752 (STSN…NNNI), and 862-882 (TSSSSNKNNNNNNNDNNNPSN). Residues 639-666 (NNNNNNNQNNNNQNNNNNNNNNNNNNNN) show a composition bias toward low complexity. Residues 863-882 (SSSSNKNNNNNNNDNNNPSN) show a composition bias toward low complexity.

The protein belongs to the protein kinase superfamily. TKL Ser/Thr protein kinase family.

The enzyme catalyses L-seryl-[protein] + ATP = O-phospho-L-seryl-[protein] + ADP + H(+). It carries out the reaction L-threonyl-[protein] + ATP = O-phospho-L-threonyl-[protein] + ADP + H(+). The chain is Probable serine/threonine-protein kinase DDB_G0290621 from Dictyostelium discoideum (Social amoeba).